The primary structure comprises 156 residues: MKLQLIAVGTRMPDWVTRGFEEYQRRFPRDMALELIEIPAGKRGKNADIVRILQKEGEQMLAAIPKGNHIVSLDLPGKNWTTPELATALTKWQLDGRDVSLLIGGPEGLAPACKEAANQSWCLSALTLPHPLVRVVVAESLYRAWSVNTNHPYHRE.

S-adenosyl-L-methionine contacts are provided by residues L73, G104, and 123 to 128 (LSALTL).

This sequence belongs to the RNA methyltransferase RlmH family. As to quaternary structure, homodimer.

It localises to the cytoplasm. It carries out the reaction pseudouridine(1915) in 23S rRNA + S-adenosyl-L-methionine = N(3)-methylpseudouridine(1915) in 23S rRNA + S-adenosyl-L-homocysteine + H(+). In terms of biological role, specifically methylates the pseudouridine at position 1915 (m3Psi1915) in 23S rRNA. The protein is Ribosomal RNA large subunit methyltransferase H of Shewanella baltica (strain OS223).